The primary structure comprises 308 residues: Porphobilinogen deaminase (308 aa).

C240 is modified (S-(dipyrrolylmethanemethyl)cysteine).

It belongs to the HMBS family. In terms of assembly, monomer. The cofactor is dipyrromethane.

The enzyme catalyses 4 porphobilinogen + H2O = hydroxymethylbilane + 4 NH4(+). Its pathway is porphyrin-containing compound metabolism; protoporphyrin-IX biosynthesis; coproporphyrinogen-III from 5-aminolevulinate: step 2/4. Its function is as follows. Tetrapolymerization of the monopyrrole PBG into the hydroxymethylbilane pre-uroporphyrinogen in several discrete steps. In Campylobacter lari (strain RM2100 / D67 / ATCC BAA-1060), this protein is Porphobilinogen deaminase.